Here is a 279-residue protein sequence, read N- to C-terminus: Very long chain fatty acid elongase 1 (279 aa).

Met-1 is subject to N-acetylmethionine. A run of 7 helical transmembrane segments spans residues 23 to 43 (PLMGSPLLITSILLTYVYFIL), 61 to 81 (FMIVYNFSLVILSLYIVYEFL), 110 to 130 (VAWLFMLSKVIELMDTVIFIL), 137 to 154 (VTFLHVFHHSVLPWSWWW), 176 to 196 (VVMYLYYGLSALGPVAQPYLW), 203 to 223 (AIQLIQFVLVSLHISQYYFMP), and 231 to 251 (IIIHLIWMYGTIFFILFSNFW). The Di-lysine motif signature appears at 275–279 (KVKAN).

It belongs to the ELO family. ELOVL1 subfamily. Interacts with LASS2, TECR and HSD17B12. Interacts with TECR. Expressed in a broad variety of tissues. Highly expressed in stomach, lung, kidney, skin and intestine. Moderately expressed in white adipose tissue, liver, spleen, brain, brown adipose tissue, heart and muscle. Weakly expressed in testis.

It localises to the endoplasmic reticulum membrane. It carries out the reaction a very-long-chain acyl-CoA + malonyl-CoA + H(+) = a very-long-chain 3-oxoacyl-CoA + CO2 + CoA. The catalysed reaction is eicosanoyl-CoA + malonyl-CoA + H(+) = 3-oxodocosanoyl-CoA + CO2 + CoA. The enzyme catalyses docosanoyl-CoA + malonyl-CoA + H(+) = 3-oxotetracosanoyl-CoA + CO2 + CoA. It catalyses the reaction tetracosanoyl-CoA + malonyl-CoA + H(+) = 3-oxohexacosanoyl-CoA + CO2 + CoA. It carries out the reaction (11Z)-eicosenoyl-CoA + malonyl-CoA + H(+) = 3-oxo-(13Z)-docosenoyl-CoA + CO2 + CoA. The catalysed reaction is (13Z)-docosenoyl-CoA + malonyl-CoA + H(+) = 3-oxo-(15Z)-tetracosenoyl-CoA + CO2 + CoA. The protein operates within lipid metabolism; fatty acid biosynthesis. Catalyzes the first and rate-limiting reaction of the four reactions that constitute the long-chain fatty acids elongation cycle. This endoplasmic reticulum-bound enzymatic process allows the addition of 2 carbons to the chain of long- and very long-chain fatty acids (VLCFAs) per cycle. Condensing enzyme that exhibits activity toward saturated and monounsaturated acyl-CoA substrates, with the highest activity towards C22:0 acyl-CoA. May participate in the production of both saturated and monounsaturated VLCFAs of different chain lengths that are involved in multiple biological processes as precursors of membrane lipids and lipid mediators. Important for saturated C24:0 and monounsaturated C24:1 sphingolipid synthesis. Indirectly inhibits RPE65 via production of VLCFAs. The polypeptide is Very long chain fatty acid elongase 1 (Mus musculus (Mouse)).